Reading from the N-terminus, the 1427-residue chain is DNA-directed RNA polymerase subunit beta' (1427 aa).

Positions 66, 68, 81, and 84 each coordinate Zn(2+). Mg(2+) contacts are provided by Asp-472, Asp-474, and Asp-476. Positions 815, 889, 896, and 899 each coordinate Zn(2+).

This sequence belongs to the RNA polymerase beta' chain family. As to quaternary structure, the RNAP catalytic core consists of 2 alpha, 1 beta, 1 beta' and 1 omega subunit. When a sigma factor is associated with the core the holoenzyme is formed, which can initiate transcription. Mg(2+) serves as cofactor. It depends on Zn(2+) as a cofactor.

It carries out the reaction RNA(n) + a ribonucleoside 5'-triphosphate = RNA(n+1) + diphosphate. Its function is as follows. DNA-dependent RNA polymerase catalyzes the transcription of DNA into RNA using the four ribonucleoside triphosphates as substrates. The sequence is that of DNA-directed RNA polymerase subunit beta' from Bacteroides thetaiotaomicron (strain ATCC 29148 / DSM 2079 / JCM 5827 / CCUG 10774 / NCTC 10582 / VPI-5482 / E50).